The primary structure comprises 321 residues: Lipoyl synthase (321 aa).

The [4Fe-4S] cluster site is built by Cys-68, Cys-73, Cys-79, Cys-94, Cys-98, Cys-101, and Ser-308. The Radical SAM core domain maps to 80 to 297; the sequence is FNHGTATFMI…KAEAIAMGFT (218 aa).

It belongs to the radical SAM superfamily. Lipoyl synthase family. It depends on [4Fe-4S] cluster as a cofactor.

It is found in the cytoplasm. It carries out the reaction [[Fe-S] cluster scaffold protein carrying a second [4Fe-4S](2+) cluster] + N(6)-octanoyl-L-lysyl-[protein] + 2 oxidized [2Fe-2S]-[ferredoxin] + 2 S-adenosyl-L-methionine + 4 H(+) = [[Fe-S] cluster scaffold protein] + N(6)-[(R)-dihydrolipoyl]-L-lysyl-[protein] + 4 Fe(3+) + 2 hydrogen sulfide + 2 5'-deoxyadenosine + 2 L-methionine + 2 reduced [2Fe-2S]-[ferredoxin]. Its pathway is protein modification; protein lipoylation via endogenous pathway; protein N(6)-(lipoyl)lysine from octanoyl-[acyl-carrier-protein]: step 2/2. Catalyzes the radical-mediated insertion of two sulfur atoms into the C-6 and C-8 positions of the octanoyl moiety bound to the lipoyl domains of lipoate-dependent enzymes, thereby converting the octanoylated domains into lipoylated derivatives. This is Lipoyl synthase from Pectobacterium carotovorum subsp. carotovorum (strain PC1).